The sequence spans 214 residues: Small ribosomal subunit protein uS3c (214 aa).

The 73-residue stretch at 39–111 (IRTYLNKLAK…QLTINIIEVE (73 aa)) folds into the KH type-2 domain.

Belongs to the universal ribosomal protein uS3 family. Part of the 30S ribosomal subunit.

The protein localises to the plastid. It is found in the chloroplast. The protein is Small ribosomal subunit protein uS3c (rps3) of Trieres chinensis (Marine centric diatom).